A 230-amino-acid chain; its full sequence is Acyl-protein thioesterase 1 (230 aa).

Catalysis depends on charge relay system residues Ser119, Asp174, and His208. Lys224 is modified (N6-acetyllysine).

It belongs to the AB hydrolase superfamily. AB hydrolase 2 family. Homodimer. As to expression, ubiquitous. Detected at low levels in all tissues tested.

The protein resides in the cytoplasm. The protein localises to the cell membrane. Its subcellular location is the nucleus membrane. It is found in the endoplasmic reticulum. It catalyses the reaction S-hexadecanoyl-L-cysteinyl-[protein] + H2O = L-cysteinyl-[protein] + hexadecanoate + H(+). The enzyme catalyses 1-hexadecanoyl-sn-glycero-3-phosphocholine + H2O = sn-glycerol 3-phosphocholine + hexadecanoate + H(+). The catalysed reaction is a 1-(9Z-octadecenoyl)-2-acyl-sn-glycero-3-phosphocholine + H2O = a 2-acyl-sn-glycero-3-phosphocholine + (9Z)-octadecenoate + H(+). Acts as an acyl-protein thioesterase. Hydrolyzes fatty acids from S-acylated cysteine residues in proteins such as trimeric G alpha proteins or HRAS. Acts as a palmitoyl thioesterase that catalyzes depalmitoylation of proteins, such as ADRB2, KCNMA1 and SQSTM1. Acts as a negative regulator of autophagy by mediating palmitoylation of SQSTM1, decreasing affinity between SQSTM1 and ATG8 proteins and recruitment of ubiquitinated cargo proteins to autophagosomes. Acts as a lysophospholipase and hydrolyzes lysophosphatidylcholine (lyso-PC). Also hydrolyzes lysophosphatidylethanolamine (lyso-PE), lysophosphatidylinositol (lyso-PI) and lysophosphatidylserine (lyso-PS). Has much higher thioesterase activity than lysophospholipase activity. Contributes to the production of lysophosphatidic acid (LPA) during blood coagulation by recognizing and cleaving plasma phospholipids to generate lysophospholipids which in turn act as substrates for ENPP2 to produce LPA. The chain is Acyl-protein thioesterase 1 (Lypla1) from Rattus norvegicus (Rat).